We begin with the raw amino-acid sequence, 141 residues long: Sperm-associated microtubule inner protein 10 (141 aa).

Basic and acidic residues predominate over residues 1–16 (MASEKDDGPALPKLDD). The tract at residues 1-33 (MASEKDDGPALPKLDDDNQTAENTCKPAEEQPQ) is disordered.

Microtubule inner protein component of sperm flagellar doublet microtubules. As to expression, expressed predominantly in the testis.

Its subcellular location is the cytoplasm. It localises to the cytoskeleton. The protein localises to the flagellum axoneme. Microtubule inner protein (MIP) part of the dynein-decorated doublet microtubules (DMTs) in flagellum axoneme, which is required for flagellum beating. May serve to reinforce and thus stabilize the microtubule structure in the sperm flagella. Involved in the regulation of sperm motility. The protein is Sperm-associated microtubule inner protein 10 (Spmip10) of Mus musculus (Mouse).